A 94-amino-acid chain; its full sequence is Selenoprotein K (94 aa).

The helical transmembrane segment at 20 to 42 (LSFLTDFFWGAVEFIGLFFQTLV) threads the bilayer. The segment at 48-94 (KDGNNSASSRFSDGRGPPGFPGRRRMGRINHGAGPTPPPMGGGGUGR) is disordered. The span at 49 to 58 (DGNNSASSRF) shows a compositional bias: polar residues. Position 92 (Sec-92) is a non-standard amino acid, selenocysteine.

This sequence belongs to the selenoprotein K family.

It localises to the endoplasmic reticulum membrane. It is found in the cell membrane. Required for Ca(2+) flux in immune cells and plays a role in T-cell proliferation and in T-cell and neutrophil migration. Involved in endoplasmic reticulum-associated degradation (ERAD) of soluble glycosylated proteins. Required for cell surface expression of CD36 and involved in macrophage uptake of low-density lipoprotein and in foam cell formation. Required for palmitoylation. The protein is Selenoprotein K (selenok) of Danio rerio (Zebrafish).